The following is a 355-amino-acid chain: Replication-associated protein (355 aa).

The CRESS-DNA virus Rep endonuclease domain occupies 11-114 (LHRTANTFLT…PLALFERGTF (104 aa)). The short motif at 18–21 (FLTY) is the RCR-1 element. Glu-52, His-60, and His-62 together coordinate a divalent metal cation. An RCR-2 motif is present at residues 60 to 62 (HLH). Residue Tyr-100 is the For DNA cleavage activity of the active site. Residues 100-103 (YILK) carry the RCR-3 motif. Glu-104 contacts a divalent metal cation. The interval 175 to 187 (SANKLFPDIQEEF) is oligomerization. 229 to 236 (GPTRTGKS) contacts ATP. Residues 252-270 (VDWSSYNEDAIYNIVDDIP) are transactivation. Residues 292–303 (KYGKKKKVQMKS) carry the Nuclear localization signal motif.

Belongs to the geminiviridae Rep protein family. Homooligomer. Rep binds to repeated DNA motifs (iterons). Forms the O-complex, which is a Rep-DNA complex involved in the initiation of RCR. Part of the C- and V-complexes which are RepA-Rep-DNA complexes involved in the c-sense and v-sense transcription. Mg(2+) serves as cofactor. Requires Mn(2+) as cofactor.

It localises to the host nucleus. Its function is as follows. Essential for the replication of viral ssDNA. The closed circular ssDNA genome is first converted to a superhelical dsDNA. Rep binds a specific region at the genome origin of replication. It introduces an endonucleolytic nick within the conserved sequence 5'-TAATATTAC-3' in the intergenic region of the genome present in all geminiviruses, thereby initiating the rolling circle replication (RCR). Following cleavage, binds covalently to the 5'-phosphate of DNA as a tyrosyl ester. The cleavage gives rise to a free 3'-OH that serves as a primer for the cellular DNA polymerase. The polymerase synthesizes the (+) strand DNA by rolling circle mechanism. After one round of replication, a Rep-catalyzed nucleotidyl transfer reaction releases a circular single-stranded virus genome, thereby terminating the replication. Displays origin-specific DNA cleavage, nucleotidyl transferase, ATPase and helicase activities. Acts as an inhibitor of C-sense gene transcription. This is Replication-associated protein from Maize streak virus genotype D (isolate Raw) (MSV).